The chain runs to 192 residues: Ribose 1,5-bisphosphate phosphokinase PhnN (192 aa).

15–22 (GPSGAGKD) lines the ATP pocket.

It belongs to the ribose 1,5-bisphosphokinase family.

It catalyses the reaction alpha-D-ribose 1,5-bisphosphate + ATP = 5-phospho-alpha-D-ribose 1-diphosphate + ADP. Its pathway is metabolic intermediate biosynthesis; 5-phospho-alpha-D-ribose 1-diphosphate biosynthesis; 5-phospho-alpha-D-ribose 1-diphosphate from D-ribose 5-phosphate (route II): step 3/3. Functionally, catalyzes the phosphorylation of ribose 1,5-bisphosphate to 5-phospho-D-ribosyl alpha-1-diphosphate (PRPP). The chain is Ribose 1,5-bisphosphate phosphokinase PhnN from Brucella abortus biovar 1 (strain 9-941).